The primary structure comprises 288 residues: Energy-coupling factor transporter ATP-binding protein EcfA2 (288 aa).

Residues 3 to 245 (IEFKNVDYIY…PDWLKKHFLD (243 aa)) enclose the ABC transporter domain. 40–47 (GHTGSGKS) is an ATP binding site.

It belongs to the ABC transporter superfamily. Energy-coupling factor EcfA family. As to quaternary structure, forms a stable energy-coupling factor (ECF) transporter complex composed of 2 membrane-embedded substrate-binding proteins (S component), 2 ATP-binding proteins (A component) and 2 transmembrane proteins (T component).

The protein resides in the cell membrane. In terms of biological role, ATP-binding (A) component of a common energy-coupling factor (ECF) ABC-transporter complex. Unlike classic ABC transporters this ECF transporter provides the energy necessary to transport a number of different substrates. The chain is Energy-coupling factor transporter ATP-binding protein EcfA2 from Lactobacillus gasseri (strain ATCC 33323 / DSM 20243 / BCRC 14619 / CIP 102991 / JCM 1131 / KCTC 3163 / NCIMB 11718 / NCTC 13722 / AM63).